Reading from the N-terminus, the 242-residue chain is Large ribosomal subunit protein uL1 (242 aa).

Belongs to the universal ribosomal protein uL1 family. As to quaternary structure, part of the 50S ribosomal subunit.

In terms of biological role, binds directly to 23S rRNA. The L1 stalk is quite mobile in the ribosome, and is involved in E site tRNA release. Protein L1 is also a translational repressor protein, it controls the translation of the L11 operon by binding to its mRNA. This chain is Large ribosomal subunit protein uL1, found in Streptomyces virginiae (Streptomyces cinnamonensis).